A 521-amino-acid polypeptide reads, in one-letter code: CDP-diacylglycerol--glycerol-3-phosphate 3-phosphatidyltransferase (521 aa).

91–98 serves as a coordination point for ATP; the sequence is ASLYLGKS. PLD phosphodiesterase domains are found at residues 177–203 and 419–457; these read GLGL…SNDY and NGWS…TRRA. Catalysis depends on residues His182, Lys184, and Asp189.

The protein belongs to the CDP-alcohol phosphatidyltransferase class-II family.

It is found in the mitochondrion. It carries out the reaction a CDP-1,2-diacyl-sn-glycerol + sn-glycerol 3-phosphate = a 1,2-diacyl-sn-glycero-3-phospho-(1'-sn-glycero-3'-phosphate) + CMP + H(+). It functions in the pathway phospholipid metabolism; phosphatidylglycerol biosynthesis; phosphatidylglycerol from CDP-diacylglycerol: step 1/2. Essential for the viability of mitochondrial petite mutant. Catalyzes the committed step to the synthesis of the acidic phospholipids. The sequence is that of CDP-diacylglycerol--glycerol-3-phosphate 3-phosphatidyltransferase (PGS1) from Saccharomyces cerevisiae (strain ATCC 204508 / S288c) (Baker's yeast).